The primary structure comprises 376 residues: MSALLNITEPNNNTNSNDNDFLASLTTDAPQAIASKYSREQIAQLFDLPLMDLLLQAQTIHRQNFNANEVQISTLLSIKTGNCPEDCGYCSQSGHHRDKTKLVAEKRIEVDKVIAAAKRAKATGSSRFCMGAAWKHPSAKDMPYVVELVKEVKALGLETCMTLGMLDTDQAAQLADAGLDYYNHNLDTSRSYYEQVVSTRSYDERLDTITNVRNSGINVCSGNIVGMGESRDDRIDWVHELLKMPKAPESIPVNLLVPIQGTPIGDKVLAEGQLSVLEWIRTIAVTRICCPSSYVRLSAGRESLSDAEQALAFMAGANSFFYGDKLLTTGNASQSGDDRLMRELGLTKQFAAPRAPKQVPVIDAMSGHQSQVVLAS.

The Radical SAM core domain occupies 68 to 292 (NEVQISTLLS…IAVTRICCPS (225 aa)). C83, C87, and C90 together coordinate [4Fe-4S] cluster. C129, C160, C220, and R296 together coordinate [2Fe-2S] cluster.

It belongs to the radical SAM superfamily. Biotin synthase family. As to quaternary structure, homodimer. It depends on [4Fe-4S] cluster as a cofactor. [2Fe-2S] cluster serves as cofactor.

The enzyme catalyses (4R,5S)-dethiobiotin + (sulfur carrier)-SH + 2 reduced [2Fe-2S]-[ferredoxin] + 2 S-adenosyl-L-methionine = (sulfur carrier)-H + biotin + 2 5'-deoxyadenosine + 2 L-methionine + 2 oxidized [2Fe-2S]-[ferredoxin]. It participates in cofactor biosynthesis; biotin biosynthesis; biotin from 7,8-diaminononanoate: step 2/2. In terms of biological role, catalyzes the conversion of dethiobiotin (DTB) to biotin by the insertion of a sulfur atom into dethiobiotin via a radical-based mechanism. The sequence is that of Biotin synthase from Psychrobacter cryohalolentis (strain ATCC BAA-1226 / DSM 17306 / VKM B-2378 / K5).